Consider the following 94-residue polypeptide: Acylphosphatase (94 aa).

Positions 8–94 constitute an Acylphosphatase-like domain; it reads RFTARVVGRV…QGDLADFRRK (87 aa). Residues R23 and N41 contribute to the active site.

Belongs to the acylphosphatase family.

The catalysed reaction is an acyl phosphate + H2O = a carboxylate + phosphate + H(+). The protein is Acylphosphatase (acyP) of Frankia alni (strain DSM 45986 / CECT 9034 / ACN14a).